Here is a 358-residue protein sequence, read N- to C-terminus: Nicotinate-nucleotide--dimethylbenzimidazole phosphoribosyltransferase (358 aa).

Residue Glu313 is the Proton acceptor of the active site.

It belongs to the CobT family.

The enzyme catalyses 5,6-dimethylbenzimidazole + nicotinate beta-D-ribonucleotide = alpha-ribazole 5'-phosphate + nicotinate + H(+). Its pathway is nucleoside biosynthesis; alpha-ribazole biosynthesis; alpha-ribazole from 5,6-dimethylbenzimidazole: step 1/2. In terms of biological role, catalyzes the synthesis of alpha-ribazole-5'-phosphate from nicotinate mononucleotide (NAMN) and 5,6-dimethylbenzimidazole (DMB). The polypeptide is Nicotinate-nucleotide--dimethylbenzimidazole phosphoribosyltransferase (Corynebacterium glutamicum (strain R)).